The following is a 270-amino-acid chain: MDRYAVIGHPVEHSKSPLIHAAFAQQTGQQLEYGKVQAPLDGFVAIVTDLQEKGYRGVNVTVPFKFEAYSLATELTPRARDAGAVNTLTFTDGAIHGDNTDGVGLVRDILQNLAFTLAGKRVLLLGAGGAAEGVLAPLLEASPLSLCIANRTVDKAEAMAARVRPGQTSLDARGFDALADQEFDVVINATSSGLHNERLPLPSGLFAADALAYDMMYGRETPFMRYAREEGASRIADGLGMLVEQAAEAFYIWRRVRPDTAPVMAALRAA.

Shikimate contacts are provided by residues 14 to 16 (SKS) and T61. Residue K65 is the Proton acceptor of the active site. 2 residues coordinate shikimate: N86 and D101. NADP(+) is bound by residues 126–130 (GAGGA), 150–155 (NRTVDK), and M215. Shikimate is bound at residue Y217. G238 lines the NADP(+) pocket.

The protein belongs to the shikimate dehydrogenase family. As to quaternary structure, homodimer.

The enzyme catalyses shikimate + NADP(+) = 3-dehydroshikimate + NADPH + H(+). It functions in the pathway metabolic intermediate biosynthesis; chorismate biosynthesis; chorismate from D-erythrose 4-phosphate and phosphoenolpyruvate: step 4/7. Its function is as follows. Involved in the biosynthesis of the chorismate, which leads to the biosynthesis of aromatic amino acids. Catalyzes the reversible NADPH linked reduction of 3-dehydroshikimate (DHSA) to yield shikimate (SA). This is Shikimate dehydrogenase (NADP(+)) from Methylobacillus flagellatus (strain ATCC 51484 / DSM 6875 / VKM B-1610 / KT).